The sequence spans 187 residues: Elongation factor P (187 aa).

It belongs to the elongation factor P family.

Its subcellular location is the cytoplasm. Its pathway is protein biosynthesis; polypeptide chain elongation. In terms of biological role, involved in peptide bond synthesis. Stimulates efficient translation and peptide-bond synthesis on native or reconstituted 70S ribosomes in vitro. Probably functions indirectly by altering the affinity of the ribosome for aminoacyl-tRNA, thus increasing their reactivity as acceptors for peptidyl transferase. The polypeptide is Elongation factor P (Chelativorans sp. (strain BNC1)).